The sequence spans 194 residues: Imidazoleglycerol-phosphate dehydratase (194 aa).

It belongs to the imidazoleglycerol-phosphate dehydratase family.

It localises to the cytoplasm. It catalyses the reaction D-erythro-1-(imidazol-4-yl)glycerol 3-phosphate = 3-(imidazol-4-yl)-2-oxopropyl phosphate + H2O. It participates in amino-acid biosynthesis; L-histidine biosynthesis; L-histidine from 5-phospho-alpha-D-ribose 1-diphosphate: step 6/9. The chain is Imidazoleglycerol-phosphate dehydratase from Bacillus cereus (strain ATCC 14579 / DSM 31 / CCUG 7414 / JCM 2152 / NBRC 15305 / NCIMB 9373 / NCTC 2599 / NRRL B-3711).